Reading from the N-terminus, the 369-residue chain is Peptide chain release factor 2 (369 aa).

Gln-251 carries the post-translational modification N5-methylglutamine.

This sequence belongs to the prokaryotic/mitochondrial release factor family. In terms of processing, methylated by PrmC. Methylation increases the termination efficiency of RF2.

The protein localises to the cytoplasm. Functionally, peptide chain release factor 2 directs the termination of translation in response to the peptide chain termination codons UGA and UAA. This is Peptide chain release factor 2 from Campylobacter fetus subsp. fetus (strain 82-40).